A 217-amino-acid polypeptide reads, in one-letter code: Probable GTP-binding protein EngB (217 aa).

The EngB-type G domain occupies 29 to 213 (GPLEVAFAGR…RQAIAETVGI (185 aa)). Residues 37 to 44 (GRSNVGKS), 64 to 68 (GRTQE), 91 to 94 (DMPG), 158 to 161 (TKTD), and 192 to 194 (TSS) contribute to the GTP site. Mg(2+) contacts are provided by serine 44 and threonine 66.

It belongs to the TRAFAC class TrmE-Era-EngA-EngB-Septin-like GTPase superfamily. EngB GTPase family. Mg(2+) is required as a cofactor.

Its function is as follows. Necessary for normal cell division and for the maintenance of normal septation. The protein is Probable GTP-binding protein EngB of Rhizobium johnstonii (strain DSM 114642 / LMG 32736 / 3841) (Rhizobium leguminosarum bv. viciae).